We begin with the raw amino-acid sequence, 300 residues long: Type II methyltransferase M.Cfr9I (300 aa).

Residues 109-129 form a disordered region; the sequence is RGYRAPDKKNPARAMAVRPDT.

The protein belongs to the N(4)/N(6)-methyltransferase family. N(4) subfamily.

The catalysed reaction is a 2'-deoxycytidine in DNA + S-adenosyl-L-methionine = an N(4)-methyl-2'-deoxycytidine in DNA + S-adenosyl-L-homocysteine + H(+). Functionally, a beta subtype methylase, recognizes the double-stranded sequence 5'-CCCGGG-3', methylates C-2 on both strands, and protects the DNA from cleavage by the Cfr9I endonuclease. In Citrobacter freundii, this protein is Type II methyltransferase M.Cfr9I.